The following is a 316-amino-acid chain: Acetyl-coenzyme A carboxylase carboxyl transferase subunit alpha (316 aa).

Positions Arg-39 to Met-293 constitute a CoA carboxyltransferase C-terminal domain.

Belongs to the AccA family. As to quaternary structure, acetyl-CoA carboxylase is a heterohexamer composed of biotin carboxyl carrier protein (AccB), biotin carboxylase (AccC) and two subunits each of ACCase subunit alpha (AccA) and ACCase subunit beta (AccD).

Its subcellular location is the cytoplasm. The catalysed reaction is N(6)-carboxybiotinyl-L-lysyl-[protein] + acetyl-CoA = N(6)-biotinyl-L-lysyl-[protein] + malonyl-CoA. The protein operates within lipid metabolism; malonyl-CoA biosynthesis; malonyl-CoA from acetyl-CoA: step 1/1. In terms of biological role, component of the acetyl coenzyme A carboxylase (ACC) complex. First, biotin carboxylase catalyzes the carboxylation of biotin on its carrier protein (BCCP) and then the CO(2) group is transferred by the carboxyltransferase to acetyl-CoA to form malonyl-CoA. The chain is Acetyl-coenzyme A carboxylase carboxyl transferase subunit alpha from Stutzerimonas stutzeri (strain A1501) (Pseudomonas stutzeri).